The primary structure comprises 154 residues: MKNVIIDLQIASEDATNLPSVEQIQLWANAAIRAENSQPEMTVRIVDEEESHHLNLTYRGKDKPTNVLSFPFECPDEIELPLIGDLVICRQVVEREATEQEKPLMAHWAHMIVHGSLHLLGYDHIEDDEAEEMERLETEIMLSLGFTDPYIIEK.

3 residues coordinate Zn(2+): histidine 114, histidine 118, and histidine 124.

The protein belongs to the endoribonuclease YbeY family. Zn(2+) is required as a cofactor.

It is found in the cytoplasm. Functionally, single strand-specific metallo-endoribonuclease involved in late-stage 70S ribosome quality control and in maturation of the 3' terminus of the 16S rRNA. This is Endoribonuclease YbeY from Histophilus somni (strain 2336) (Haemophilus somnus).